A 228-amino-acid chain; its full sequence is Archaeal flagellar ATP-binding protein FlaH (228 aa).

The ATP site is built by Gly30, Thr31, Lys33, Ser34, Val35, Glu57, and Lys191. Residue Ser34 participates in Mg(2+) binding. Glu57 serves as a coordination point for Mg(2+).

It belongs to the FlaH family. In terms of assembly, the S.acidocaldarius archaellum assembly machinery and its filament consist of seven proteins (FlaB, FlaF, FlaG, FlaH, FlaI, FlaJ and FlaX). Interacts directly with the FlaX ring and the motor ATPase FlaI. Monomers, which can probably form homohexamers upon binding to ATP. In vitro, FlaH assembles as a second ring inside the FlaX ring.

The protein resides in the archaeal flagellum. It is found in the cytoplasm. Functionally, component of the archaellum. FlaX, FlaH and FlaI form the core cytoplasmic motor complex of the crenarchaeal archaellum. FlaH binds ATP with high affinity but lacks detectable in vitro ATPase activity. ATP binding is essential for interaction with FlaI and for archaellum assembly. The sequence is that of Archaeal flagellar ATP-binding protein FlaH from Sulfolobus acidocaldarius (strain ATCC 33909 / DSM 639 / JCM 8929 / NBRC 15157 / NCIMB 11770).